The primary structure comprises 425 residues: Trigger factor (425 aa).

Residues glycine 158–proline 231 form the PPIase FKBP-type domain.

It belongs to the FKBP-type PPIase family. Tig subfamily.

The protein resides in the cytoplasm. It catalyses the reaction [protein]-peptidylproline (omega=180) = [protein]-peptidylproline (omega=0). In terms of biological role, involved in protein export. Acts as a chaperone by maintaining the newly synthesized protein in an open conformation. Functions as a peptidyl-prolyl cis-trans isomerase. The polypeptide is Trigger factor (Thermotoga petrophila (strain ATCC BAA-488 / DSM 13995 / JCM 10881 / RKU-1)).